The following is a 176-amino-acid chain: NAD(P)H-quinone oxidoreductase subunit 6, chloroplastic (176 aa).

The next 5 membrane-spanning stretches (helical) occupy residues 10-30 (ILML…VLLT), 33-53 (IYSA…YFLL), 60-80 (VAQL…AVMF), 95-115 (IGDG…MTTI), and 152-172 (FYLP…GAIT).

Belongs to the complex I subunit 6 family. In terms of assembly, NDH is composed of at least 16 different subunits, 5 of which are encoded in the nucleus.

It localises to the plastid. The protein localises to the chloroplast thylakoid membrane. It catalyses the reaction a plastoquinone + NADH + (n+1) H(+)(in) = a plastoquinol + NAD(+) + n H(+)(out). The enzyme catalyses a plastoquinone + NADPH + (n+1) H(+)(in) = a plastoquinol + NADP(+) + n H(+)(out). In terms of biological role, NDH shuttles electrons from NAD(P)H:plastoquinone, via FMN and iron-sulfur (Fe-S) centers, to quinones in the photosynthetic chain and possibly in a chloroplast respiratory chain. The immediate electron acceptor for the enzyme in this species is believed to be plastoquinone. Couples the redox reaction to proton translocation, and thus conserves the redox energy in a proton gradient. This chain is NAD(P)H-quinone oxidoreductase subunit 6, chloroplastic (ndhG), found in Triticum aestivum (Wheat).